A 236-amino-acid polypeptide reads, in one-letter code: Small ribosomal subunit protein uS2c (236 aa).

It belongs to the universal ribosomal protein uS2 family.

It is found in the plastid. The protein resides in the chloroplast. The protein is Small ribosomal subunit protein uS2c (rps2) of Vitis vinifera (Grape).